Here is a 511-residue protein sequence, read N- to C-terminus: Bifunctional purine biosynthesis protein PurH (511 aa).

Positions 1-145 constitute an MGS-like domain; it reads MKKRALVSVS…KNHKFVSVIV (145 aa).

The protein belongs to the PurH family.

The enzyme catalyses (6R)-10-formyltetrahydrofolate + 5-amino-1-(5-phospho-beta-D-ribosyl)imidazole-4-carboxamide = 5-formamido-1-(5-phospho-D-ribosyl)imidazole-4-carboxamide + (6S)-5,6,7,8-tetrahydrofolate. It carries out the reaction IMP + H2O = 5-formamido-1-(5-phospho-D-ribosyl)imidazole-4-carboxamide. It participates in purine metabolism; IMP biosynthesis via de novo pathway; 5-formamido-1-(5-phospho-D-ribosyl)imidazole-4-carboxamide from 5-amino-1-(5-phospho-D-ribosyl)imidazole-4-carboxamide (10-formyl THF route): step 1/1. Its pathway is purine metabolism; IMP biosynthesis via de novo pathway; IMP from 5-formamido-1-(5-phospho-D-ribosyl)imidazole-4-carboxamide: step 1/1. This Bacillus cereus (strain ZK / E33L) protein is Bifunctional purine biosynthesis protein PurH.